We begin with the raw amino-acid sequence, 138 residues long: Basic phospholipase A2 BP-I (138 aa).

The first 16 residues, 1-16, serve as a signal peptide directing secretion; sequence MRTLWIMAVLLLGVDG. 7 disulfides stabilise this stretch: Cys42/Cys132, Cys44/Cys60, Cys59/Cys112, Cys65/Cys138, Cys66/Cys105, Cys73/Cys98, and Cys91/Cys103. Ca(2+) contacts are provided by Gly45 and Gly47. His63 is a catalytic residue. Residue Asp106 is part of the active site.

It belongs to the phospholipase A2 family. Group II subfamily. K49 sub-subfamily. Ca(2+) serves as cofactor. As to expression, expressed by the venom gland.

It is found in the secreted. It carries out the reaction a 1,2-diacyl-sn-glycero-3-phosphocholine + H2O = a 1-acyl-sn-glycero-3-phosphocholine + a fatty acid + H(+). Its function is as follows. Snake venom phospholipase A2 (PLA2) that has strong myotoxic activity with a low phospholipase A2 activity. PLA2 catalyzes the calcium-dependent hydrolysis of the 2-acyl groups in 3-sn-phosphoglycerides. This chain is Basic phospholipase A2 BP-I, found in Protobothrops flavoviridis (Habu).